Consider the following 180-residue polypeptide: Large ribosomal subunit protein uL5 (180 aa).

This sequence belongs to the universal ribosomal protein uL5 family. Part of the 50S ribosomal subunit; part of the 5S rRNA/L5/L18/L25 subcomplex. Contacts the 5S rRNA and the P site tRNA. Forms a bridge to the 30S subunit in the 70S ribosome.

This is one of the proteins that bind and probably mediate the attachment of the 5S RNA into the large ribosomal subunit, where it forms part of the central protuberance. In the 70S ribosome it contacts protein S13 of the 30S subunit (bridge B1b), connecting the 2 subunits; this bridge is implicated in subunit movement. Contacts the P site tRNA; the 5S rRNA and some of its associated proteins might help stabilize positioning of ribosome-bound tRNAs. This chain is Large ribosomal subunit protein uL5, found in Limosilactobacillus reuteri (strain DSM 20016) (Lactobacillus reuteri).